The chain runs to 155 residues: FUN14 domain-containing protein 1 (155 aa).

At 1–47 (MASRNPPPQDYESDDESYEVLDLTEYARRHHWWNRVFGHSSGPMVEK) the chain is on the cytoplasmic side. Phosphoserine is present on residues Ser-13 and Ser-17. Tyr-18 carries the phosphotyrosine; by SRC modification. The YXXL motif lies at 18-21 (YEVL). A helical transmembrane segment spans residues 48–68 (YSVATQIVMGGVTGWCAGFLF). At 69–74 (QKVGKL) the chain is on the mitochondrial intermembrane side. The helical transmembrane segment at 75 to 95 (AATAVGGGFLLLQVASHSGYV) threads the bilayer. Residues 96–133 (QIDWKRVEKDVNKAKRQIKKRANKAAPEINNIIEEATD) lie on the Cytoplasmic side of the membrane. Lys-119 is covalently cross-linked (Glycyl lysine isopeptide (Lys-Gly) (interchain with G-Cter in ubiquitin)). The chain crosses the membrane as a helical span at residues 134–154 (FIKQNIVISSGFVGGFLLGLA). Ser-155 is a topological domain (mitochondrial intermembrane).

Belongs to the FUN14 family. In terms of assembly, interacts (via YXXL motif) with MAP1 LC3 family proteins MAP1LC3A, MAP1LC3B and GABARAP. Interacts with DNM1L/DPR1. Interacts with GPX4. In terms of processing, phosphorylation at Ser-13 by CK2 and at Tyr-18 by SRC inhibits activation of mitophagy. Following hypoxia, dephosphorylated at Tyr-18, leading to interaction with MAP1 LC3 family proteins and triggering mitophagy. Dephosphorylation is mediated by PGAM5. Phosphorylated by ULK1 at Ser-17 which enhances FUNDC1 binding to LC3. Post-translationally, ubiquitinated on Lys-119. Deubiquitinated by USP19; leading to hypoxia-induced DRP1 oligomerization and GTPase activity.

It is found in the mitochondrion outer membrane. Its function is as follows. Integral mitochondrial outer-membrane protein that mediates the formation of mitochondria-associated endoplasmic reticulum membranes (MAMs). In turn, mediates angiogenesis and neoangiogenesis through interference with intracellular Ca(2+) communication and regulation of the vascular endothelial growth factor receptor KDR/VEGFR2 expression at both mRNA and protein levels. Also acts as an activator of hypoxia-induced mitophagy, an important mechanism for mitochondrial quality and homeostasis, by interacting with and recruiting LC3 protein family to mitochondria. Mechanistically, recruits DRP1 at ER-mitochondria contact sites leading to DRP1 oligomerization and GTPase activity to facilitate mitochondrial fission during hypoxia. Additionally, plays a role in hepatic ferroptosis by interacting directly with glutathione peroxidase/GPX4 to facilitate its recruitment into mitochondria through TOM/TIM complex where it is degraded by mitophagy. This chain is FUN14 domain-containing protein 1 (Fundc1), found in Mus musculus (Mouse).